The chain runs to 182 residues: MVNVSIARRYARALLDVASEAGRTDAVAEQLTAFADVIAKNAELTDVLVNPAYTREQRLRVVESVMQAIPGGVEATLANTLRLLVDRNRLGYLADIARLFRDMADARAGRVRGHVTSAAPLPADALAQLQQTLQQLTQRNVLLETRVDPSLLGGVSAQVGSILYDGSIRTQLEEMRRELKQR.

It belongs to the ATPase delta chain family. F-type ATPases have 2 components, F(1) - the catalytic core - and F(0) - the membrane proton channel. F(1) has five subunits: alpha(3), beta(3), gamma(1), delta(1), epsilon(1). F(0) has three main subunits: a(1), b(2) and c(10-14). The alpha and beta chains form an alternating ring which encloses part of the gamma chain. F(1) is attached to F(0) by a central stalk formed by the gamma and epsilon chains, while a peripheral stalk is formed by the delta and b chains.

Its subcellular location is the cell inner membrane. F(1)F(0) ATP synthase produces ATP from ADP in the presence of a proton or sodium gradient. F-type ATPases consist of two structural domains, F(1) containing the extramembraneous catalytic core and F(0) containing the membrane proton channel, linked together by a central stalk and a peripheral stalk. During catalysis, ATP synthesis in the catalytic domain of F(1) is coupled via a rotary mechanism of the central stalk subunits to proton translocation. Functionally, this protein is part of the stalk that links CF(0) to CF(1). It either transmits conformational changes from CF(0) to CF(1) or is implicated in proton conduction. The chain is ATP synthase subunit delta from Myxococcus xanthus (strain DK1622).